The sequence spans 112 residues: Mitochondrial import inner membrane translocase subunit TIM14-1 (112 aa).

N-acetylalanine is present on Ala2. Residues 7–23 traverse the membrane as a helical segment; that stretch reads AGVAVAATALAGRYGIQ. Residues 53–112 enclose the J domain; sequence EAALILGVRESVAAEKVKEAHRKVMVANHPDAGGSHFLASKINEAKDVMLGKTKNSGSAF.

Belongs to the TIM14 family. In terms of assembly, probable component of the PAM complex at least composed of a mitochondrial HSP70 protein, TIMM44 and TIMM14. The complex interacts with the TIMM23 component of the TIM17:23 complex.

It localises to the mitochondrion. The protein resides in the mitochondrion inner membrane. In terms of biological role, component of the PAM complex, a complex required for the translocation of transit peptide-containing proteins from the inner membrane into the mitochondrial matrix in an ATP-dependent manner. The chain is Mitochondrial import inner membrane translocase subunit TIM14-1 (TIM14-1) from Arabidopsis thaliana (Mouse-ear cress).